Here is a 652-residue protein sequence, read N- to C-terminus: DNA mismatch repair protein MutL (652 aa).

The protein belongs to the DNA mismatch repair MutL/HexB family.

Its function is as follows. This protein is involved in the repair of mismatches in DNA. It is required for dam-dependent methyl-directed DNA mismatch repair. May act as a 'molecular matchmaker', a protein that promotes the formation of a stable complex between two or more DNA-binding proteins in an ATP-dependent manner without itself being part of a final effector complex. The chain is DNA mismatch repair protein MutL from Neorickettsia sennetsu (strain ATCC VR-367 / Miyayama) (Ehrlichia sennetsu).